The following is a 63-amino-acid chain: Protease 2 small chain (63 aa).

In terms of domain architecture, Peptidase S8 spans Q11 to I63.

It belongs to the peptidase S8 family. As to quaternary structure, heterodimer of a large and a small chain.

The protein resides in the secreted. This chain is Protease 2 small chain, found in Achromobacter lyticus.